The following is a 975-amino-acid chain: Glycine dehydrogenase (decarboxylating) (975 aa).

The residue at position 723 (Lys-723) is an N6-(pyridoxal phosphate)lysine.

Belongs to the GcvP family. In terms of assembly, the glycine cleavage system is composed of four proteins: P, T, L and H. Requires pyridoxal 5'-phosphate as cofactor.

It catalyses the reaction N(6)-[(R)-lipoyl]-L-lysyl-[glycine-cleavage complex H protein] + glycine + H(+) = N(6)-[(R)-S(8)-aminomethyldihydrolipoyl]-L-lysyl-[glycine-cleavage complex H protein] + CO2. The glycine cleavage system catalyzes the degradation of glycine. The P protein binds the alpha-amino group of glycine through its pyridoxal phosphate cofactor; CO(2) is released and the remaining methylamine moiety is then transferred to the lipoamide cofactor of the H protein. In Burkholderia ambifaria (strain ATCC BAA-244 / DSM 16087 / CCUG 44356 / LMG 19182 / AMMD) (Burkholderia cepacia (strain AMMD)), this protein is Glycine dehydrogenase (decarboxylating).